The primary structure comprises 148 residues: uncharacterized protein (148 aa).

2 helical membrane-spanning segments follow: residues 16-36 (IVGAVIFSMSIIVILYISIIL) and 41-61 (LSFSIILAVDILIIALFAYIF).

The protein to M.jannaschii MJ0696.

It localises to the cell membrane. This is an uncharacterized protein from Methanocaldococcus jannaschii (strain ATCC 43067 / DSM 2661 / JAL-1 / JCM 10045 / NBRC 100440) (Methanococcus jannaschii).